A 352-amino-acid polypeptide reads, in one-letter code: D-alanine--D-alanine ligase (352 aa).

In terms of domain architecture, ATP-grasp spans 135–344; it reads KTVFAKAGLP…FPQLVDRLIE (210 aa). Residue 171–226 coordinates ATP; sequence EETLNYPCFVKPANLGSSVGIAKVRSRSELEKALDQAASYDRRIIVEAGVIAREVE. The Mg(2+) site is built by Asp297, Glu311, and Asn313.

It belongs to the D-alanine--D-alanine ligase family. It depends on Mg(2+) as a cofactor. Mn(2+) is required as a cofactor.

Its subcellular location is the cytoplasm. The enzyme catalyses 2 D-alanine + ATP = D-alanyl-D-alanine + ADP + phosphate + H(+). It participates in cell wall biogenesis; peptidoglycan biosynthesis. Cell wall formation. The sequence is that of D-alanine--D-alanine ligase from Gloeothece citriformis (strain PCC 7424) (Cyanothece sp. (strain PCC 7424)).